The following is a 379-amino-acid chain: Lipid-A-disaccharide synthase (379 aa).

Belongs to the LpxB family.

It catalyses the reaction a lipid X + a UDP-2-N,3-O-bis[(3R)-3-hydroxyacyl]-alpha-D-glucosamine = a lipid A disaccharide + UDP + H(+). It participates in bacterial outer membrane biogenesis; LPS lipid A biosynthesis. In terms of biological role, condensation of UDP-2,3-diacylglucosamine and 2,3-diacylglucosamine-1-phosphate to form lipid A disaccharide, a precursor of lipid A, a phosphorylated glycolipid that anchors the lipopolysaccharide to the outer membrane of the cell. The polypeptide is Lipid-A-disaccharide synthase (Vibrio parahaemolyticus serotype O3:K6 (strain RIMD 2210633)).